The chain runs to 190 residues: Large ribosomal subunit protein bL25 (190 aa).

It belongs to the bacterial ribosomal protein bL25 family. CTC subfamily. As to quaternary structure, part of the 50S ribosomal subunit; part of the 5S rRNA/L5/L18/L25 subcomplex. Contacts the 5S rRNA. Binds to the 5S rRNA independently of L5 and L18.

In terms of biological role, this is one of the proteins that binds to the 5S RNA in the ribosome where it forms part of the central protuberance. The polypeptide is Large ribosomal subunit protein bL25 (Neisseria gonorrhoeae (strain ATCC 700825 / FA 1090)).